A 371-amino-acid chain; its full sequence is tRNA-specific 2-thiouridylase MnmA 2 (371 aa).

ATP-binding positions include 13-20 (GMSGGVDS) and Met-39. The tract at residues 99-101 (NPD) is interaction with target base in tRNA. Residue Cys-104 is the Nucleophile of the active site. A disulfide bridge connects residues Cys-104 and Cys-200. Residue Gly-128 participates in ATP binding. The tract at residues 150-152 (KDQ) is interaction with tRNA. Catalysis depends on Cys-200, which acts as the Cysteine persulfide intermediate. The segment at 308-309 (RY) is interaction with tRNA.

This sequence belongs to the MnmA/TRMU family.

It localises to the cytoplasm. The enzyme catalyses S-sulfanyl-L-cysteinyl-[protein] + uridine(34) in tRNA + AH2 + ATP = 2-thiouridine(34) in tRNA + L-cysteinyl-[protein] + A + AMP + diphosphate + H(+). Its function is as follows. Catalyzes the 2-thiolation of uridine at the wobble position (U34) of tRNA, leading to the formation of s(2)U34. This chain is tRNA-specific 2-thiouridylase MnmA 2, found in Geobacillus kaustophilus (strain HTA426).